A 228-amino-acid chain; its full sequence is Demethylmenaquinone methyltransferase (228 aa).

S-adenosyl-L-methionine contacts are provided by residues threonine 62, aspartate 80, 100 to 101 (DA), and serine 117.

The protein belongs to the class I-like SAM-binding methyltransferase superfamily. MenG/UbiE family.

The enzyme catalyses a 2-demethylmenaquinol + S-adenosyl-L-methionine = a menaquinol + S-adenosyl-L-homocysteine + H(+). Its pathway is quinol/quinone metabolism; menaquinone biosynthesis; menaquinol from 1,4-dihydroxy-2-naphthoate: step 2/2. In terms of biological role, methyltransferase required for the conversion of demethylmenaquinol (DMKH2) to menaquinol (MKH2). This is Demethylmenaquinone methyltransferase from Mycolicibacterium vanbaalenii (strain DSM 7251 / JCM 13017 / BCRC 16820 / KCTC 9966 / NRRL B-24157 / PYR-1) (Mycobacterium vanbaalenii).